The chain runs to 316 residues: Adenine deaminase (316 aa).

Positions 14, 16, and 194 each coordinate Zn(2+). Glutamate 197 (proton donor) is an active-site residue. Aspartate 275 contributes to the Zn(2+) binding site. Aspartate 276 is a substrate binding site.

It belongs to the metallo-dependent hydrolases superfamily. Adenosine and AMP deaminases family. Adenine deaminase type 2 subfamily. Requires Zn(2+) as cofactor.

It carries out the reaction adenine + H2O + H(+) = hypoxanthine + NH4(+). Catalyzes the hydrolytic deamination of adenine to hypoxanthine. Plays an important role in the purine salvage pathway and in nitrogen catabolism. This chain is Adenine deaminase, found in Bordetella avium (strain 197N).